The chain runs to 200 residues: Small ribosomal subunit protein mS38 (200 aa).

The protein belongs to the mitochondrion-specific ribosomal protein mS38 family. As to quaternary structure, component of the mitochondrial ribosome small subunit (28S) which comprises a 12S rRNA and about 30 distinct proteins. Interacts with Aurora-A. As to expression, ubiquitously expressed and especially highly expressed in heart, skeletal muscle and testis.

The protein localises to the mitochondrion matrix. It is found in the nucleus. In terms of biological role, may act as a negative regulator of Aurora-A kinase, by down-regulation through proteasome-dependent degradation. The polypeptide is Small ribosomal subunit protein mS38 (Aurkaip1) (Mus musculus (Mouse)).